We begin with the raw amino-acid sequence, 124 residues long: Small ribosomal subunit protein uS12 (124 aa).

Positions 1 to 29 are disordered; the sequence is MPTINQLVRRPRRPRESANKAPALQHNPQ. Residue Asp90 is modified to 3-methylthioaspartic acid.

Belongs to the universal ribosomal protein uS12 family. Part of the 30S ribosomal subunit. Contacts proteins S8 and S17. May interact with IF1 in the 30S initiation complex.

Its function is as follows. With S4 and S5 plays an important role in translational accuracy. Interacts with and stabilizes bases of the 16S rRNA that are involved in tRNA selection in the A site and with the mRNA backbone. Located at the interface of the 30S and 50S subunits, it traverses the body of the 30S subunit contacting proteins on the other side and probably holding the rRNA structure together. The combined cluster of proteins S8, S12 and S17 appears to hold together the shoulder and platform of the 30S subunit. This chain is Small ribosomal subunit protein uS12, found in Anaplasma marginale (strain Florida).